The sequence spans 216 residues: NADH-quinone oxidoreductase subunit C (216 aa).

Belongs to the complex I 30 kDa subunit family. In terms of assembly, NDH-1 is composed of 14 different subunits. Subunits NuoB, C, D, E, F, and G constitute the peripheral sector of the complex.

The protein localises to the cell inner membrane. The enzyme catalyses a quinone + NADH + 5 H(+)(in) = a quinol + NAD(+) + 4 H(+)(out). NDH-1 shuttles electrons from NADH, via FMN and iron-sulfur (Fe-S) centers, to quinones in the respiratory chain. The immediate electron acceptor for the enzyme in this species is believed to be ubiquinone. Couples the redox reaction to proton translocation (for every two electrons transferred, four hydrogen ions are translocated across the cytoplasmic membrane), and thus conserves the redox energy in a proton gradient. This Francisella tularensis subsp. holarctica (strain OSU18) protein is NADH-quinone oxidoreductase subunit C.